Here is a 313-residue protein sequence, read N- to C-terminus: tRNA pseudouridine synthase B (313 aa).

D42 acts as the Nucleophile in catalysis.

Belongs to the pseudouridine synthase TruB family. Type 1 subfamily.

The catalysed reaction is uridine(55) in tRNA = pseudouridine(55) in tRNA. Its function is as follows. Responsible for synthesis of pseudouridine from uracil-55 in the psi GC loop of transfer RNAs. The sequence is that of tRNA pseudouridine synthase B from Prochlorococcus marinus (strain SARG / CCMP1375 / SS120).